Reading from the N-terminus, the 641-residue chain is MTTATEKQTLGFQAEVKQLLHLMIHSLYSNKEIFLRELVSNASDALDKLRFQALSKEDLYEGDNDLKVRLEFDDKAQTITLSDNGIGMSRDEVVTNLGTIAKSGTAEFLSTLTGDQKQDSRLIGQFGVGFYSAFIVADKVEVYTRRAGLKPDEAVHWESSGEGDFSIETVTKEERGTRIVLHLKDEEKEFANGWRLRSLVKKYSDHISFPVEMIKENMDVGEEEEGKEKAEPAPEFESVNEATALWTLPRNEIKDEDYKEFYKHIAHDFSDPLLWAHNRVEGKLDYTSLLYVPAKAPYDLWNREAPRGLKLYIQRVFIMDDAEQFLPLYLRFVKGVVDSNDLSLNVSREILQNDKAVESMRSALTKRVLDMLSKLAADDAEKYQSFWDEFGRVLKEGPAEDFINREKIAKLMRFSSTHQDDDKQTQSLEDYVSRMKQGQDKIYYITAESYSAGVKSPHLEIFRKKGIEVLVMHDRIDEWLMSHLNEFDGKHFQDIAKGELDLGEVEDKEEKEKQEEVSKEAEPLLNRLKEVLKDHVEEVRVTHRLTDSPACLVVGAYDMGVQMRRIMEAAGQALPESKPTFEINPDHPLVKKLGEEQGARFEDLTWVLFDQARLAGGENLKDPAGYVSRLNKLLLELSNAG.

The tract at residues 1-348 (MTTATEKQTL…SNDLSLNVSR (348 aa)) is a; substrate-binding. A b region spans residues 349 to 565 (EILQNDKAVE…AYDMGVQMRR (217 aa)). The c stretch occupies residues 566 to 641 (IMEAAGQALP…KLLLELSNAG (76 aa)).

Belongs to the heat shock protein 90 family. Homodimer.

It localises to the cytoplasm. Molecular chaperone. Has ATPase activity. The chain is Chaperone protein HtpG from Hahella chejuensis (strain KCTC 2396).